The chain runs to 297 residues: MDVAIIGGGAWGSALYKALLEKSSVALVSRSGREGIHQCSLQEALEARFLVLAIASSALRGWLNEANLPPKTKILVACKGIEEGSGALVSEILEEFLPRENLAYLAGPSFAKEVREGLPCALVIHSHHLELAQEMSQFFPSWIRLYVENDVVGGEVCGAYKNVIAIAGGICDGLGLGYNAKASLVARGLVEMARFGQYFGAKIETFLGLSGAGDLFLTSGSTLSRNYRVGLGLAQGKSLEEILIELGEVAEGIKTARAITQIAQREGIHAPIAHEVNAILQGKNPKESLKDLLSHGR.

Residues W11, R30, and K79 each coordinate NADPH. Residues K79, G107, and S109 each coordinate sn-glycerol 3-phosphate. A111 contributes to the NADPH binding site. The sn-glycerol 3-phosphate site is built by K161, D214, S224, R225, and N226. Residue K161 is the Proton acceptor of the active site. R225 is a binding site for NADPH. V249 and E251 together coordinate NADPH.

This sequence belongs to the NAD-dependent glycerol-3-phosphate dehydrogenase family.

It localises to the cytoplasm. The catalysed reaction is sn-glycerol 3-phosphate + NAD(+) = dihydroxyacetone phosphate + NADH + H(+). It carries out the reaction sn-glycerol 3-phosphate + NADP(+) = dihydroxyacetone phosphate + NADPH + H(+). Its pathway is membrane lipid metabolism; glycerophospholipid metabolism. Functionally, catalyzes the reduction of the glycolytic intermediate dihydroxyacetone phosphate (DHAP) to sn-glycerol 3-phosphate (G3P), the key precursor for phospholipid synthesis. This Wolinella succinogenes (strain ATCC 29543 / DSM 1740 / CCUG 13145 / JCM 31913 / LMG 7466 / NCTC 11488 / FDC 602W) (Vibrio succinogenes) protein is Glycerol-3-phosphate dehydrogenase [NAD(P)+].